A 146-amino-acid chain; its full sequence is 3-hydroxyacyl-[acyl-carrier-protein] dehydratase FabZ (146 aa).

Residue histidine 48 is part of the active site.

Belongs to the thioester dehydratase family. FabZ subfamily.

The protein resides in the cytoplasm. The catalysed reaction is a (3R)-hydroxyacyl-[ACP] = a (2E)-enoyl-[ACP] + H2O. Its function is as follows. Involved in unsaturated fatty acids biosynthesis. Catalyzes the dehydration of short chain beta-hydroxyacyl-ACPs and long chain saturated and unsaturated beta-hydroxyacyl-ACPs. The sequence is that of 3-hydroxyacyl-[acyl-carrier-protein] dehydratase FabZ from Paracidovorax citrulli (strain AAC00-1) (Acidovorax citrulli).